The chain runs to 365 residues: MTTKLGQANPANYQQQLDDKEKATKEQFSDFWQGDIEVHPSPPSHYRMRAEFKMWQQGAEAFYAMYQPGEYKKPVTLEWEFSVGAEKIVELMPKLLEIVNASELLRKRLFQVEFLTTTTGESVTTLIYHKPLTEEWQAEANALASSLNTHIIGRSKKQKIVLTQDYVEETLTISGTPFTYKQIESGFTQPNAAVCQKMLQWAVDATANLGGDLVELYCGNGNFTLPLSKNFDKVLATEVSKTSVKAAEYNIEKNGCKNITIARMSSEEFTEALNGVREFRRLKDIELDSYNFSTVFVDPPRAGLDEDTEALISRFDNIIYISCNPDTLANNLANLCKTHKVERFALFDQFPYTDHRECGVILTKK.

5 residues coordinate S-adenosyl-L-methionine: glutamine 189, tyrosine 217, asparagine 222, glutamate 238, and aspartate 298. Cysteine 323 (nucleophile) is an active-site residue. Catalysis depends on glutamate 357, which acts as the Proton acceptor.

Belongs to the class I-like SAM-binding methyltransferase superfamily. RNA M5U methyltransferase family. TrmA subfamily.

It catalyses the reaction uridine(54) in tRNA + S-adenosyl-L-methionine = 5-methyluridine(54) in tRNA + S-adenosyl-L-homocysteine + H(+). It carries out the reaction uridine(341) in tmRNA + S-adenosyl-L-methionine = 5-methyluridine(341) in tmRNA + S-adenosyl-L-homocysteine + H(+). Functionally, dual-specificity methyltransferase that catalyzes the formation of 5-methyluridine at position 54 (m5U54) in all tRNAs, and that of position 341 (m5U341) in tmRNA (transfer-mRNA). The protein is tRNA/tmRNA (uracil-C(5))-methyltransferase of Saccharophagus degradans (strain 2-40 / ATCC 43961 / DSM 17024).